The primary structure comprises 357 residues: Retinoic acid-induced protein 3 (357 aa).

Residues 1–33 (MATTVPDGCRNGLKSKYYRLCDKAEAWGIVLET) are Extracellular-facing. The chain crosses the membrane as a helical span at residues 34-54 (VATAGVVTSVAFMLTLPILVC). Over 55–68 (KVQDSNRRKMLPTQ) the chain is Cytoplasmic. A helical membrane pass occupies residues 69–89 (FLFLLGVLGIFGLTFAFIIGL). Topologically, residues 90–97 (DGSTGPTR) are extracellular. Residues 98–118 (FFLFGILFSICFSCLLAHAVS) form a helical membrane-spanning segment. Residues 119–129 (LTKLVRGRKPL) are Cytoplasmic-facing. The helical transmembrane segment at 130 to 150 (SLLVILGLAVGFSLVQDVIAI) threads the bilayer. At 151–176 (EYIVLTMNRTNVNVFSELSAPRRNED) the chain is on the extracellular side. N158 carries N-linked (GlcNAc...) asparagine glycosylation. Residues 177-197 (FVLLLTYVLFLMALTFLMSSF) form a helical membrane-spanning segment. Topologically, residues 198 to 212 (TFCGSFTGWKRHGAH) are cytoplasmic. Residues 213-233 (IYLTMLLSIAIWVAWITLLML) traverse the membrane as a helical segment. At 234–247 (PDFDRRWDDTILSS) the chain is on the extracellular side. A helical transmembrane segment spans residues 248–268 (ALAANGWVFLLAYVSPEFWLL). At 269 to 357 (TKQRNPMDYP…KDYEVKKEGS (89 aa)) the chain is on the cytoplasmic side. S301 carries the post-translational modification Phosphoserine. Phosphotyrosine is present on residues Y317 and Y320. Phosphoserine is present on S345. Y347 and Y350 each carry phosphotyrosine.

The protein belongs to the G-protein coupled receptor 3 family. In terms of assembly, interacts (via its transmembrane domain) with EGFR. In terms of processing, phosphorylated in two conserved double-tyrosine motifs, Tyr-317/Tyr-320 and Tyr-347/Tyr-350, by EGFR; leading to inactivation of the tumor suppressive function of GPRC5A in lung cancer cells. Tyr-317 and Tyr-320 are the preferred residues responsible for EGFR-mediated GPRC5A phosphorylation. Expressed at high level in fetal and adult lung tissues but repressed in most human lung cancers. Constitutively expressed in fetal kidney and adult placenta, kidney, prostate, testis, ovary, small intestine, colon, stomach, and spinal cord at low to moderate levels. Not detectable in fetal heart, brain, and liver and adult heart, brain, liver, skeletal muscle, pancreas, spleen, thymus, and peripheral leukocytes. According to PubMed:10783259, expressed at low but detectable level in pancreas and heart.

The protein localises to the cell membrane. It is found in the cytoplasmic vesicle membrane. In terms of biological role, orphan receptor. Could be involved in modulating differentiation and maintaining homeostasis of epithelial cells. This retinoic acid-inducible GPCR provide evidence for a possible interaction between retinoid and G-protein signaling pathways. Functions as a negative modulator of EGFR signaling. May act as a lung tumor suppressor. The chain is Retinoic acid-induced protein 3 (GPRC5A) from Homo sapiens (Human).